We begin with the raw amino-acid sequence, 811 residues long: MNRKNHYHFIGIGGIGMSALAHILLDRGYSVSGSDLNQGITIDKLIAKGAAYLPGHKESYVPEEGTIIYGSGIAKDNVEYKEALRKQLPLVHRAELLALLMQEQTSILVSGSHGKTTVSSLITAIFQTAKKDPSYAIGGLNSQYLNGYSGSSEYFIAEADESDGSLKHYFPKVAVVTNLDNEHLSNFEGSKEKLAQTIEEFTRKVDDPNLCFYNGDCQELKGRISGISYGFSQECALYIYSHRQEGWRSVFSLSFLGKDYLDIDLNLIGKHNVANAAAAIGVALTFGIDEESIREALKSFSGVQRRMERKNTSEKFLFLEDYAHHPSEISCTLRALRDAVGLRRIIAICQPHRFSRLLYCLEEFFNAFQDADEVILTDVYSAGEMPLDLPSPEKLAETISLSSHVCCTYVPYDNVIEHLKQNIRVHDVCISLGAGNIHTVGNALKDFEPKKLSVGVVCGGQSCEHDVSLLSARNVVQYLSPQHYDVQYFVINRQGLWSQVANLDAGSDYNSKNYHVLSSKIAEALANLDFVLPILHGPFGEDGTLQGFLEIANKPYGGPSLLFSAISMDKIMTKRLAASVGVPVVPYQPLTLPTWKRTPELCMRRILETFTFPMFVKTAHLGSSIGVFEVHNETELKAKISEAFLYDTDVFIEESRLGSREIEVSCLGDACSCYYISEPHERRGSKGFIGYEEKYGFNGKSSATIQYDLNLSEESKTRVKELTERVYRVIQGKGSCRIDFFLDREGNFWLSEMNPIPGMTKSSPFLHDFARLGWTFEQIVHQLIIAGLHKFDQKKKVSSTFNKQCLLTAKS.

Residues 1-450 form a UDP-N-acetylmuramate--alanine ligase region; it reads MNRKNHYHFI…GNALKDFEPK (450 aa). ATP contacts are provided by residues 111–117 and 607–662; these read GSHGKTT and LETF…SREI. Residues 451–811 are D-alanine--D-alanine ligase; that stretch reads KLSVGVVCGG…NKQCLLTAKS (361 aa). The ATP-grasp domain occupies 574-785; sequence KRLAASVGVP…FEQIVHQLII (212 aa). Mg(2+) is bound by residues Asp739, Glu752, and Asn754.

This sequence in the N-terminal section; belongs to the MurCDEF family. In the C-terminal section; belongs to the D-alanine--D-alanine ligase family. Requires Mg(2+) as cofactor. Mn(2+) serves as cofactor.

Its subcellular location is the cytoplasm. The catalysed reaction is UDP-N-acetyl-alpha-D-muramate + L-alanine + ATP = UDP-N-acetyl-alpha-D-muramoyl-L-alanine + ADP + phosphate + H(+). It carries out the reaction 2 D-alanine + ATP = D-alanyl-D-alanine + ADP + phosphate + H(+). It functions in the pathway cell wall biogenesis; peptidoglycan biosynthesis. The chain is Bifunctional enzyme MurC/Ddl (murC/ddlA) from Chlamydia caviae (strain ATCC VR-813 / DSM 19441 / 03DC25 / GPIC) (Chlamydophila caviae).